A 461-amino-acid polypeptide reads, in one-letter code: MKEPDAIKLFVGQIPRHLEEKDLKPIFEQFGRIFELTVIKDKYTGLHKGCAFLTYCARDSALKAQSALHEQKTLPGMNRPIQVKPADSESRGEDRKLFVGMLGKQQTDEDVRKMFEPFGTIDECTVLRGPDGTSKGCAFVKFQTHAEAQAAINTLHSSRTLPGASSSLVVKFADTEKERGLRRMQQVATQLGMFSPIALQFGAYSAYTQALMQQQAALVAAHSAYLSPMATMAAVQMQHMAAINANGLIATPITPSSGTSTPPAIAATPVSAIPAALGVNGYSPVPTQPTGQPAPDALYPNGVHPYPAQSPAAPVDPLQQAYAGMQHYTAYPAAYSLVAPAFPQPPALVAQQPPPPPQQQQQQQQQQQQREGPDGCNIFIYHLPQEFTDSEILQMFVPFGHVISAKVFVDRATNQSKCFGFVSFDNPASAQAAIQAMNGFQIGMKRLKVQLKRPKDANRPY.

RRM domains follow at residues 7–88 (IKLF…PADS) and 95–175 (RKLF…FADT). Residues 345–358 (PPALVAQQPPPPPQ) show a composition bias toward pro residues. The interval 345–375 (PPALVAQQPPPPPQQQQQQQQQQQQREGPDG) is disordered. Over residues 359–369 (QQQQQQQQQQQ) the composition is skewed to low complexity. The RRM 3 domain occupies 376 to 454 (CNIFIYHLPQ…KRLKVQLKRP (79 aa)).

It belongs to the CELF/BRUNOL family.

Its subcellular location is the nucleus. The protein resides in the cytoplasm. In terms of biological role, RNA-binding protein involved in the regulation of pre-mRNA alternative splicing. Mediates exon inclusion and/or exclusion in pre-mRNA that are subject to tissue-specific and developmentally regulated alternative splicing. Specifically activates exon 5 inclusion of cardiac isoforms of TNNT2 during heart remodeling at the juvenile to adult transition. Activates the splicing of MAPT/Tau exon 10. Binds to muscle-specific splicing enhancer (MSE) intronic sites flanking the alternative exon 5 of TNNT2 pre-mRNA. The sequence is that of CUGBP Elav-like family member 3 (CELF3) from Bos taurus (Bovine).